The primary structure comprises 359 residues: Molybdenum import ATP-binding protein ModC (359 aa).

Positions 1–233 constitute an ABC transporter domain; sequence MSGLTVSIRG…IDAESEGGGV (233 aa). Residue 32-39 participates in ATP binding; the sequence is GHSGAGKT. Positions 289–355 constitute a Mop domain; the sequence is AISIRNLLPV…VKAVSVDRAA (67 aa).

Belongs to the ABC transporter superfamily. Molybdate importer (TC 3.A.1.8) family. The complex is composed of two ATP-binding proteins (ModC), two transmembrane proteins (ModB) and a solute-binding protein (ModA).

It localises to the cell inner membrane. The catalysed reaction is molybdate(out) + ATP + H2O = molybdate(in) + ADP + phosphate + H(+). Functionally, part of the ABC transporter complex ModABC involved in molybdenum import. Responsible for energy coupling to the transport system. The chain is Molybdenum import ATP-binding protein ModC from Brucella abortus (strain 2308).